Consider the following 426-residue polypeptide: Trigger factor (426 aa).

Positions 165–239 constitute a PPIase FKBP-type domain; that stretch reads GDVYKLNEAG…ISEIKRLELP (75 aa).

This sequence belongs to the FKBP-type PPIase family. Tig subfamily.

The protein resides in the cytoplasm. The enzyme catalyses [protein]-peptidylproline (omega=180) = [protein]-peptidylproline (omega=0). Involved in protein export. Acts as a chaperone by maintaining the newly synthesized protein in an open conformation. Functions as a peptidyl-prolyl cis-trans isomerase. The chain is Trigger factor from Pelodictyon phaeoclathratiforme (strain DSM 5477 / BU-1).